Reading from the N-terminus, the 1060-residue chain is Carbamoyl phosphate synthase large chain (1060 aa).

The interval 1–401 (MPKRQDIHKI…SLLKAVRSLE (401 aa)) is carboxyphosphate synthetic domain. ATP is bound by residues Arg129, Arg169, Gly175, Gly176, Arg208, Ile210, Glu215, Gly241, Val242, His243, Gln284, and Glu298. The ATP-grasp 1 domain occupies 133-327 (KNLMQKLHEP…IAKMAAKIAV (195 aa)). Mg(2+)-binding residues include Gln284, Glu298, and Asn300. Mn(2+) contacts are provided by Gln284, Glu298, and Asn300. An oligomerization domain region spans residues 402 to 546 (VGLIHPERPA…YSTYESSTES (145 aa)). The interval 547-929 (VKSDKPSVLV…ALYKAFEAAG (383 aa)) is carbamoyl phosphate synthetic domain. The ATP-grasp 2 domain maps to 671–861 (DQVIKSLKLP…LAQVATLAIL (191 aa)). ATP-binding residues include Arg707, His746, Leu748, Glu752, Gly777, Ile778, His779, Ser780, Gln820, and Glu832. Mg(2+) contacts are provided by Gln820, Glu832, and Asn834. Residues Gln820, Glu832, and Asn834 each coordinate Mn(2+). Residues 930 to 1060 (MHLPQFGRAL…QAFSISPIKS (131 aa)) enclose the MGS-like domain. Positions 930–1060 (MHLPQFGRAL…QAFSISPIKS (131 aa)) are allosteric domain.

Belongs to the CarB family. Composed of two chains; the small (or glutamine) chain promotes the hydrolysis of glutamine to ammonia, which is used by the large (or ammonia) chain to synthesize carbamoyl phosphate. Tetramer of heterodimers (alpha,beta)4. Mg(2+) is required as a cofactor. It depends on Mn(2+) as a cofactor.

The catalysed reaction is hydrogencarbonate + L-glutamine + 2 ATP + H2O = carbamoyl phosphate + L-glutamate + 2 ADP + phosphate + 2 H(+). It catalyses the reaction hydrogencarbonate + NH4(+) + 2 ATP = carbamoyl phosphate + 2 ADP + phosphate + 2 H(+). Its pathway is amino-acid biosynthesis; L-arginine biosynthesis; carbamoyl phosphate from bicarbonate: step 1/1. It functions in the pathway pyrimidine metabolism; UMP biosynthesis via de novo pathway; (S)-dihydroorotate from bicarbonate: step 1/3. Functionally, large subunit of the glutamine-dependent carbamoyl phosphate synthetase (CPSase). CPSase catalyzes the formation of carbamoyl phosphate from the ammonia moiety of glutamine, carbonate, and phosphate donated by ATP, constituting the first step of 2 biosynthetic pathways, one leading to arginine and/or urea and the other to pyrimidine nucleotides. The large subunit (synthetase) binds the substrates ammonia (free or transferred from glutamine from the small subunit), hydrogencarbonate and ATP and carries out an ATP-coupled ligase reaction, activating hydrogencarbonate by forming carboxy phosphate which reacts with ammonia to form carbamoyl phosphate. The polypeptide is Carbamoyl phosphate synthase large chain (Lacticaseibacillus casei (strain BL23) (Lactobacillus casei)).